A 175-amino-acid polypeptide reads, in one-letter code: uncharacterized protein (175 aa).

A mitochondrion-targeting transit peptide spans 1-11 (METWRKGSFRN). The tract at residues 24–92 (RRLRRQSSVL…PRLYRESSSC (69 aa)) is disordered. Over residues 41-63 (GDHEEYSNREVIRELQGRPDGRR) the composition is skewed to basic and acidic residues.

It is found in the mitochondrion. This is an uncharacterized protein from Homo sapiens (Human).